The primary structure comprises 163 residues: NADH-quinone oxidoreductase subunit I (163 aa).

2 4Fe-4S ferredoxin-type domains span residues 53–83 and 94–123; these read LRRY…IEAG and VRYD…EGPN. Residues Cys63, Cys66, Cys69, Cys73, Cys103, Cys106, Cys109, and Cys113 each coordinate [4Fe-4S] cluster.

It belongs to the complex I 23 kDa subunit family. In terms of assembly, NDH-1 is composed of 14 different subunits. Subunits NuoA, H, J, K, L, M, N constitute the membrane sector of the complex. The cofactor is [4Fe-4S] cluster.

The protein resides in the cell inner membrane. The enzyme catalyses a quinone + NADH + 5 H(+)(in) = a quinol + NAD(+) + 4 H(+)(out). In terms of biological role, NDH-1 shuttles electrons from NADH, via FMN and iron-sulfur (Fe-S) centers, to quinones in the respiratory chain. The immediate electron acceptor for the enzyme in this species is believed to be ubiquinone. Couples the redox reaction to proton translocation (for every two electrons transferred, four hydrogen ions are translocated across the cytoplasmic membrane), and thus conserves the redox energy in a proton gradient. The protein is NADH-quinone oxidoreductase subunit I of Bartonella henselae (strain ATCC 49882 / DSM 28221 / CCUG 30454 / Houston 1) (Rochalimaea henselae).